A 449-amino-acid chain; its full sequence is Putative transporter C83.11 (449 aa).

Helical transmembrane passes span 7-27 (LSHILFHEKVGFLLLCLLWYI), 47-67 (VTLTFLQFGFVAFFSAVCLLF), 84-104 (VLYTTLPLSIFQIGGHVFGSL), 109-129 (IPVSTVHTVKALSPLFTVLAY), 136-156 (VYSAMTYFSLVPLTFGVTLAC), 164-184 (IVGLLYALISTCIFVSQNIFG), 205-225 (LNLLLYSSGVAFIVMIPVWLY), 255-275 (ILAFTLLSIISPVAYSIASLI), and 278-298 (IFVIVVSIIWFQQATNFTQGS). Phosphoserine is present on residues serine 348 and serine 352. Tyrosine 355 bears the Phosphotyrosine mark. Polar residues predominate over residues 382–415 (NSVYSNEGVTSSVSGNATPASVRQSTQNDFSNSN). The segment at 382-416 (NSVYSNEGVTSSVSGNATPASVRQSTQNDFSNSNI) is disordered.

It belongs to the TPT transporter family.

Its subcellular location is the membrane. The protein is Putative transporter C83.11 of Schizosaccharomyces pombe (strain 972 / ATCC 24843) (Fission yeast).